The sequence spans 170 residues: Adenine phosphoribosyltransferase (170 aa).

Belongs to the purine/pyrimidine phosphoribosyltransferase family. In terms of assembly, homodimer.

It localises to the cytoplasm. It carries out the reaction AMP + diphosphate = 5-phospho-alpha-D-ribose 1-diphosphate + adenine. It functions in the pathway purine metabolism; AMP biosynthesis via salvage pathway; AMP from adenine: step 1/1. Catalyzes a salvage reaction resulting in the formation of AMP, that is energically less costly than de novo synthesis. The chain is Adenine phosphoribosyltransferase from Mycoplasma mycoides subsp. mycoides SC (strain CCUG 32753 / NCTC 10114 / PG1).